The chain runs to 543 residues: Chaperonin GroEL (543 aa).

ATP-binding positions include 29–32 (TLGP), K50, 86–90 (DGTTT), G415, and D495.

The protein belongs to the chaperonin (HSP60) family. In terms of assembly, forms a cylinder of 14 subunits composed of two heptameric rings stacked back-to-back. Interacts with the co-chaperonin GroES.

It is found in the cytoplasm. The enzyme catalyses ATP + H2O + a folded polypeptide = ADP + phosphate + an unfolded polypeptide.. Its function is as follows. Together with its co-chaperonin GroES, plays an essential role in assisting protein folding. The GroEL-GroES system forms a nano-cage that allows encapsulation of the non-native substrate proteins and provides a physical environment optimized to promote and accelerate protein folding. This chain is Chaperonin GroEL, found in Flavobacterium johnsoniae (strain ATCC 17061 / DSM 2064 / JCM 8514 / BCRC 14874 / CCUG 350202 / NBRC 14942 / NCIMB 11054 / UW101) (Cytophaga johnsonae).